The following is a 348-amino-acid chain: N-formyl peptide receptor 2 (348 aa).

The N-linked (GlcNAc...) asparagine glycan is linked to Asn-1. Over 1–24 (NFSTPLSEYEEVSYESAGYTVLQI) the chain is Extracellular. Residues 25–47 (LPLVVLGVTFVLGVLGNGLVIWV) traverse the membrane as a helical segment. At 48-58 (AGFRMTRTVTT) the chain is on the cytoplasmic side. The helical transmembrane segment at 59–80 (ICYLNLALADFSFTATLPFLIV) threads the bilayer. At 81–97 (SMAMGEKWPFGWFLCKL) the chain is on the extracellular side. The cysteines at positions 95 and 173 are disulfide-linked. A helical membrane pass occupies residues 98 to 118 (IHIVVDINLFGSVFLIGFIAL). The Cytoplasmic segment spans residues 119 to 137 (DRCICVLHPVWAQNHRTVS). Residues 138–159 (LAMKVIVGPWILALVLTLPVFL) traverse the membrane as a helical segment. Residues 160–202 (FLTTVTIPNGDTYCTFNFASWGGTPEKRLKVAITMLTARGIIR) are Extracellular-facing. Residues 203–223 (FVIGFSMPMSIVATCYGLIAA) traverse the membrane as a helical segment. Over 224-239 (KIHKKGMIKSSRPLRV) the chain is Cytoplasmic. The helical transmembrane segment at 240-263 (LTAVVASFFICWFPFQLVALLSTV) threads the bilayer. At 264–283 (WLKEILVDGKYKIINILVNP) the chain is on the extracellular side. A helical membrane pass occupies residues 284 to 303 (TSSLAFFNSCLNPMLYVFVG). Residues 304-348 (QDFRERLIHSLPTSLERALSEDSAPTNDTAASCASPPAETELQAM) lie on the Cytoplasmic side of the membrane. Residues 322 to 348 (LSEDSAPTNDTAASCASPPAETELQAM) are disordered. The segment covering 326–335 (SAPTNDTAAS) has biased composition (polar residues).

Belongs to the G-protein coupled receptor 1 family. As to quaternary structure, interacts with APP; the interaction takes place at the cell surface and the complex is then rapidly internalized.

Its subcellular location is the cell membrane. Functionally, low affinity receptor for N-formyl-methionyl peptides, which are powerful neutrophil chemotactic factors. Binding of FMLP to the receptor causes activation of neutrophils. This response is mediated via a G-protein that activates a phosphatidylinositol-calcium second messenger system. Receptor for the chemokine-like protein FAM19A5, mediating FAM19A5-stimulated macrophage chemotaxis and the inhibitory effect on TNFSF11/RANKL-induced osteoclast differentiation. This is N-formyl peptide receptor 2 (FPR2) from Macaca mulatta (Rhesus macaque).